The primary structure comprises 131 residues: D-ribose pyranase (131 aa).

The active-site Proton donor is H20. Substrate contacts are provided by residues D28, H98, and 120–122 (YSN).

The protein belongs to the RbsD / FucU family. RbsD subfamily. In terms of assembly, homodecamer.

It is found in the cytoplasm. The catalysed reaction is beta-D-ribopyranose = beta-D-ribofuranose. The protein operates within carbohydrate metabolism; D-ribose degradation; D-ribose 5-phosphate from beta-D-ribopyranose: step 1/2. Functionally, catalyzes the interconversion of beta-pyran and beta-furan forms of D-ribose. The polypeptide is D-ribose pyranase (Limosilactobacillus fermentum (strain NBRC 3956 / LMG 18251) (Lactobacillus fermentum)).